Consider the following 405-residue polypeptide: Acetate kinase (405 aa).

Residue Asn-7 participates in Mg(2+) binding. An ATP-binding site is contributed by Lys-14. Arg-92 is a binding site for substrate. Asp-149 (proton donor/acceptor) is an active-site residue. Residues 209 to 213 (HLGNG) and 284 to 286 (DMR) each bind ATP. Glu-389 serves as a coordination point for Mg(2+).

It belongs to the acetokinase family. In terms of assembly, homodimer. It depends on Mg(2+) as a cofactor. Mn(2+) serves as cofactor.

The protein localises to the cytoplasm. The enzyme catalyses acetate + ATP = acetyl phosphate + ADP. It participates in metabolic intermediate biosynthesis; acetyl-CoA biosynthesis; acetyl-CoA from acetate: step 1/2. Functionally, catalyzes the formation of acetyl phosphate from acetate and ATP. Can also catalyze the reverse reaction. In Borrelia garinii subsp. bavariensis (strain ATCC BAA-2496 / DSM 23469 / PBi) (Borreliella bavariensis), this protein is Acetate kinase.